Consider the following 204-residue polypeptide: MVEVLRSSTFLLLRNWEFTLAWIVFFTIPLVITPLPYVGFLAFFFILLFFNSTTQYFVKVLSKNEKSLEIKEIFKIKKPVFSFSLGESVYLFFTALLYYLFTKFYAVLFFWWWFYKPFLEKELYYARTFEDGFKALLILLLRPNWKYIKLGLRWSFIGLVLLTIAVLLVLSIAGVLLASFVVLLLSVVLAHFTAETILRIKTLA.

4 consecutive transmembrane segments (helical) span residues 21-50 (AWIV…LLFF), 92-114 (FFTA…WWWF), 150-172 (LGLR…VLSI), and 176-198 (LLAS…ETIL).

The protein resides in the cell membrane. This is an uncharacterized protein from Aquifex aeolicus (strain VF5).